The chain runs to 510 residues: Beta-glucosidase 34 (510 aa).

The signal sequence occupies residues 1–26 (MGNGGRCMVEVVILLVLMAMSQGCDA). A glycan (N-linked (GlcNAc...) asparagine) is linked at N28. Q52 contributes to the a beta-D-glucoside binding site. An N-linked (GlcNAc...) asparagine glycan is attached at N120. A beta-D-glucoside is bound by residues H153 and 198 to 199 (NE). The active-site Proton donor is the E199. A disulfide bridge links C218 with C226. Residues N279 and N331 are each glycosylated (N-linked (GlcNAc...) asparagine). Y342 is an a beta-D-glucoside binding site. N360 carries N-linked (GlcNAc...) asparagine glycosylation. Residues E415, W465, 472-473 (EW), and F481 contribute to the a beta-D-glucoside site. Residue E415 is the Nucleophile of the active site.

Belongs to the glycosyl hydrolase 1 family.

The enzyme catalyses Hydrolysis of terminal, non-reducing beta-D-glucosyl residues with release of beta-D-glucose.. This Oryza sativa subsp. japonica (Rice) protein is Beta-glucosidase 34 (BGLU34).